The following is a 662-amino-acid chain: MAVLTHGSPTPSGAYFDGKGINFTLFSAHAEQVTLCLFDEQGQERQIAMPARTGDIWHGYLPGGKPGQRYGYRVSGPFDPSRGHRFNPHKLLIDPRTRALEGKVGDDPRFTGGVSQPDVRDSAAALPKCLVIHEEYDWQGDKPPAIPWGNTVIYEAHVRGLTQLHPDIPPELRGTYAALAHPALIEHLKTLGITTLELLPVQFHIDEPRLQKMGLSNYWGYNVLAPFAVDPDYASGREGISPLRELRDAVKALHNAGIEVILDVVFNHSAELDVFGPTLCQRGIDNASYYWLTPDGEYDNITGCGNALRLSHPYVTQWVIDCLNYWRDSCHVDGFRFDLGTVLGRTPAFDQHAPLFAALAADERLSACKLIAEPWDIGLGGYQLGNFPTGFSEWNDQYRDAMRGFWLRGEVPRGTFAQHFAASSRLFEQRGRLPSASINQITAHDGFTLLDLLCFNQKHNQMNGEENRDGSDNNHSNNFGCEGLVADAAIWQRRKACQRALLTTLLLSQGTPMLLAGDEQGHSQQGNNNAYCQNNILTWLDWGSADRALMTFTADLIRLRQQIPALTQDQWWQSGDSNVQWLDSQGQALSDAAWEQGCQQQLQILLSQRWLVLINATDHECEMHLPEGEWEGIPPFGVSDHAERLTTWRGSAHTICVLIKRD.

Residue Asp338 is the Nucleophile of the active site. Glu373 (proton donor) is an active-site residue.

The protein belongs to the glycosyl hydrolase 13 family.

The enzyme catalyses Hydrolysis of (1-&gt;6)-alpha-D-glucosidic linkages to branches with degrees of polymerization of three or four glucose residues in limit dextrin.. It participates in glycan degradation; glycogen degradation. In terms of biological role, removes maltotriose and maltotetraose chains that are attached by 1,6-alpha-linkage to the limit dextrin main chain, generating a debranched limit dextrin. This Yersinia pseudotuberculosis serotype I (strain IP32953) protein is Glycogen debranching enzyme.